The following is a 389-amino-acid chain: Histidinol-phosphate aminotransferase (389 aa).

K233 bears the N6-(pyridoxal phosphate)lysine mark.

Belongs to the class-II pyridoxal-phosphate-dependent aminotransferase family. Pyridoxal 5'-phosphate is required as a cofactor.

The catalysed reaction is L-histidinol phosphate + 2-oxoglutarate = 3-(imidazol-4-yl)-2-oxopropyl phosphate + L-glutamate. It functions in the pathway amino-acid biosynthesis; L-histidine biosynthesis; L-histidine from 5-phospho-alpha-D-ribose 1-diphosphate: step 7/9. The protein is Histidinol-phosphate aminotransferase (HIS5) of Candida maltosa (Yeast).